The primary structure comprises 504 residues: Glycerol kinase (504 aa).

Threonine 12 is a binding site for ADP. Threonine 12, threonine 13, and serine 14 together coordinate ATP. Threonine 12 serves as a coordination point for sn-glycerol 3-phosphate. Residue arginine 16 participates in ADP binding. Arginine 82, glutamate 83, tyrosine 134, and aspartate 246 together coordinate sn-glycerol 3-phosphate. Residues arginine 82, glutamate 83, tyrosine 134, aspartate 246, and glutamine 247 each coordinate glycerol. 2 residues coordinate ADP: threonine 268 and glycine 312. ATP-binding residues include threonine 268, glycine 312, glutamine 316, and glycine 413. Positions 413 and 417 each coordinate ADP.

It belongs to the FGGY kinase family.

It carries out the reaction glycerol + ATP = sn-glycerol 3-phosphate + ADP + H(+). It participates in polyol metabolism; glycerol degradation via glycerol kinase pathway; sn-glycerol 3-phosphate from glycerol: step 1/1. With respect to regulation, inhibited by fructose 1,6-bisphosphate (FBP). Key enzyme in the regulation of glycerol uptake and metabolism. Catalyzes the phosphorylation of glycerol to yield sn-glycerol 3-phosphate. The protein is Glycerol kinase of Paenarthrobacter aurescens (strain TC1).